The primary structure comprises 293 residues: Acetyl-coenzyme A carboxylase carboxyl transferase subunit beta (293 aa).

The region spanning 29–293 (LWVKCSECSQ…GVNELVEANI (265 aa)) is the CoA carboxyltransferase N-terminal domain. Zn(2+) contacts are provided by cysteine 33, cysteine 36, cysteine 52, and cysteine 55. The C4-type zinc-finger motif lies at 33–55 (CSECSQVAYRKDLISNFNVCSNC).

It belongs to the AccD/PCCB family. In terms of assembly, acetyl-CoA carboxylase is a heterohexamer composed of biotin carboxyl carrier protein (AccB), biotin carboxylase (AccC) and two subunits each of ACCase subunit alpha (AccA) and ACCase subunit beta (AccD). Zn(2+) is required as a cofactor.

The protein localises to the cytoplasm. It carries out the reaction N(6)-carboxybiotinyl-L-lysyl-[protein] + acetyl-CoA = N(6)-biotinyl-L-lysyl-[protein] + malonyl-CoA. Its pathway is lipid metabolism; malonyl-CoA biosynthesis; malonyl-CoA from acetyl-CoA: step 1/1. Component of the acetyl coenzyme A carboxylase (ACC) complex. Biotin carboxylase (BC) catalyzes the carboxylation of biotin on its carrier protein (BCCP) and then the CO(2) group is transferred by the transcarboxylase to acetyl-CoA to form malonyl-CoA. This chain is Acetyl-coenzyme A carboxylase carboxyl transferase subunit beta, found in Prochlorococcus marinus (strain MIT 9215).